The primary structure comprises 1388 residues: CRISPR-associated endonuclease Cas9 2 (1388 aa).

Aspartate 10 functions as the For RuvC-like nuclease domain in the catalytic mechanism. Mg(2+) is bound by residues aspartate 10, glutamate 763, and glutamate 767. The HNH Cas9-type domain occupies 771–928 (TNQGKSNSQQ…DKAGFIQRQL (158 aa)). Histidine 847 functions as the Proton acceptor for HNH nuclease domain in the catalytic mechanism. Residue histidine 990 coordinates Mg(2+). Basic and acidic residues predominate over residues 1100-1109 (EQNHGLDRGK). The interval 1100–1130 (EQNHGLDRGKPKGLFNANLSSKPKPNSNENL) is disordered. Residues 1102–1388 (NHGLDRGKPK…RIDLAKLGEG (287 aa)) are PAM-interacting domain (PI). Polar residues predominate over residues 1116-1129 (ANLSSKPKPNSNEN).

It belongs to the CRISPR-associated protein Cas9 family. Subtype II-A subfamily. Monomer. Binds crRNA and tracrRNA. Mg(2+) is required as a cofactor.

Functionally, CRISPR (clustered regularly interspaced short palindromic repeat) is an adaptive immune system that provides protection against mobile genetic elements (viruses, transposable elements and conjugative plasmids). CRISPR clusters contain spacers, sequences complementary to antecedent mobile elements, and target invading nucleic acids. CRISPR clusters are transcribed and processed into CRISPR RNA (crRNA). In type II CRISPR systems correct processing of pre-crRNA requires a trans-encoded small RNA (tracrRNA), endogenous ribonuclease 3 (rnc) and this protein. The tracrRNA serves as a guide for ribonuclease 3-aided processing of pre-crRNA. Subsequently Cas9/crRNA/tracrRNA endonucleolytically cleaves linear or circular dsDNA target complementary to the spacer yielding blunt ends; Cas9 is inactive in the absence of the 2 guide RNAs (gRNA). Cas9 recognizes a 3'-G-rich protospacer adjacent motif (PAM, GGG in this organism) in the CRISPR repeat sequences to help distinguish self versus nonself, as targets within the bacterial CRISPR locus do not have PAMs. PAM recognition is also required for catalytic activity. Complements the gRNA coprocessing defect in a cas9 deletion in S.pyogenes strain 370, and cuts target DNA in Cas9:gRNAs mixing experiments with S.mutans strain UA159. The sequence is that of CRISPR-associated endonuclease Cas9 2 from Streptococcus thermophilus (strain ATCC BAA-491 / LMD-9).